A 396-amino-acid polypeptide reads, in one-letter code: MKIMSVNSGSSSLKFQLLEMPQKNLITSGLIERIGSNNATFTLKNQNHKTSKTLEIKNHQQAVSLLLTSLIENKIIARLEDIDGVGHRIVQGGELFQDATALNDVEIAKIESLCDLAPLHNPANLVSIKAFRQVLPSLFQVGVFDTTFHQTIPVKNFLYATPYAWYQKYKVRKYGFHGISYQYITEQMQQLLNKKDAKLIICHAGNGVSLCAVDSGKSIDTSMGFTPLEGVPMGTRSGNIDPAVIKFIAEKENKGIAEITDDLNKKSGLLGVSTISNDARDILAEIKKGNPQARLAFDIQIKRIVDYIASYYVLLKGIDALVFTAGIGENSSFFRSEIIKRLSVLGFRLDEQKNEVQGKTSVITSSDSLQQAFVVPTNEELSIACDVLRIYKKVKK.

Asn-7 lines the Mg(2+) pocket. Lys-14 provides a ligand contact to ATP. Arg-88 is a substrate binding site. Asp-145 serves as the catalytic Proton donor/acceptor. Residues 203–207 (HAGNG), 278–280 (DAR), and 326–330 (GIGEN) contribute to the ATP site. Mg(2+) is bound at residue Glu-379.

This sequence belongs to the acetokinase family. Homodimer. It depends on Mg(2+) as a cofactor. The cofactor is Mn(2+).

It localises to the cytoplasm. The enzyme catalyses acetate + ATP = acetyl phosphate + ADP. Its pathway is metabolic intermediate biosynthesis; acetyl-CoA biosynthesis; acetyl-CoA from acetate: step 1/2. Its function is as follows. Catalyzes the formation of acetyl phosphate from acetate and ATP. Can also catalyze the reverse reaction. The protein is Acetate kinase of Phytoplasma australiense.